The following is a 537-amino-acid chain: Periplasmic murein peptide-binding protein MppA (537 aa).

The first 22 residues, 1 to 22 (MKHSVSVTCCALLVSSISLSYA), serve as a signal peptide directing secretion. L-alanyl-gamma-D-glutamyl-meso-2,6-diaminopimelate contacts are provided by Lys-42, Val-54, Leu-56, Gln-289, Arg-424, Ser-435, Val-437, Asp-439, and Thr-506.

It belongs to the bacterial solute-binding protein 5 family. As to quaternary structure, the complex is composed of two ATP-binding proteins (OppD and OppF), two transmembrane proteins (OppB and OppC) and a solute-binding protein (MppA).

The protein localises to the periplasm. In terms of biological role, part of the ABC transporter complex MppA-OppBCDF involved in the uptake of the cell wall murein tripeptide L-alanyl-gamma-D-glutamyl-meso-diaminopimelate. Is involved in the recycling of cell wall peptides. Binds the cell wall peptide L-Ala-D-Gly-gamma-meso-diaminopimelic acid. Can also transport ordinary alpha-linked tripeptides such as Pro-Phe-Lys, but with much lower efficiency than OppA. Cannot bind typical tripeptides such as Lys-Glu-Lys, Lys-Lys-Lys or Ala-Ala-Ala. This Escherichia coli (strain K12) protein is Periplasmic murein peptide-binding protein MppA.